The following is a 207-amino-acid chain: Outer-membrane lipoprotein LolB (207 aa).

Residues 1–21 (MPTKTVRCLRLLPLASLLLAA) form the signal peptide. A lipid anchor (N-palmitoyl cysteine) is attached at cysteine 22. Residue cysteine 22 is the site of S-diacylglycerol cysteine attachment.

The protein belongs to the LolB family. Monomer.

The protein localises to the cell outer membrane. Its function is as follows. Plays a critical role in the incorporation of lipoproteins in the outer membrane after they are released by the LolA protein. In Pectobacterium atrosepticum (strain SCRI 1043 / ATCC BAA-672) (Erwinia carotovora subsp. atroseptica), this protein is Outer-membrane lipoprotein LolB.